Reading from the N-terminus, the 187-residue chain is Prepilin peptidase-dependent protein B (187 aa).

Residues 1–7 (MPVKEQG) constitute a propeptide, leader sequence. The residue at position 8 (phenylalanine 8) is an N-methylphenylalanine. A helical transmembrane segment spans residues 8 to 28 (FSLLEVLIAMAISSVLLLGAA).

The protein localises to the membrane. Not yet known. The protein is Prepilin peptidase-dependent protein B (ppdB) of Escherichia coli (strain K12).